We begin with the raw amino-acid sequence, 270 residues long: Gap junction beta-3 protein (270 aa).

Topologically, residues 1–20 (MDWKTLQALLSGVNKYSTAF) are cytoplasmic. A helical transmembrane segment spans residues 21-40 (GRIWLSVVFVFRVLVYVVAA). Residues 41 to 75 (ERVWGDEQKDFDCNTKQPGCTNVCYDNYFPISNIR) lie on the Extracellular side of the membrane. The helical transmembrane segment at 76–98 (LWALQLIFVTCPSLLVILHVAYR) threads the bilayer. The Cytoplasmic segment spans residues 99–126 (EERERRHRQKHGDQCAKLYDNAGKKHGG). The helical transmembrane segment at 127–149 (LWWTYLFSLIFKLIIEFLFLYLL) threads the bilayer. The Extracellular portion of the chain corresponds to 150–187 (HTLWHGFNMPRLVQCANVAPCPNIVDCYIARPTEKKIF). Residues 188–210 (TYFMVGASAVCIVLTICELCYLI) form a helical membrane-spanning segment. Residues 211 to 270 (CHRVLRGLHKDKPRGGCSPSSSASRASTCRCHHKLVEAGEVDPDPGNNKLQASAPNLTPI) are Cytoplasmic-facing. A disordered region spans residues 250–270 (EVDPDPGNNKLQASAPNLTPI). The span at 258–270 (NKLQASAPNLTPI) shows a compositional bias: polar residues.

This sequence belongs to the connexin family. Beta-type (group I) subfamily. As to quaternary structure, a connexon is composed of a hexamer of connexins. Interacts with CNST.

It is found in the cell membrane. The protein resides in the cell junction. Its subcellular location is the gap junction. Its function is as follows. One gap junction consists of a cluster of closely packed pairs of transmembrane channels, the connexons, through which materials of low MW diffuse from one cell to a neighboring cell. The chain is Gap junction beta-3 protein (GJB3) from Homo sapiens (Human).